The primary structure comprises 242 residues: Putative S-adenosyl-L-methionine-dependent methyltransferase Mmcs_0580 (242 aa).

S-adenosyl-L-methionine-binding positions include Asp104 and 134–135; that span reads DL.

This sequence belongs to the UPF0677 family.

Functionally, exhibits S-adenosyl-L-methionine-dependent methyltransferase activity. This Mycobacterium sp. (strain MCS) protein is Putative S-adenosyl-L-methionine-dependent methyltransferase Mmcs_0580.